We begin with the raw amino-acid sequence, 138 residues long: Translation initiation factor 2 subunit beta (138 aa).

Belongs to the eIF-2-beta/eIF-5 family. In terms of assembly, heterotrimer composed of an alpha, a beta and a gamma chain.

Functionally, eIF-2 functions in the early steps of protein synthesis by forming a ternary complex with GTP and initiator tRNA. This is Translation initiation factor 2 subunit beta from Methanococcus vannielii (strain ATCC 35089 / DSM 1224 / JCM 13029 / OCM 148 / SB).